A 257-amino-acid chain; its full sequence is Acetyl-coenzyme A carboxylase carboxyl transferase subunit beta (257 aa).

The CoA carboxyltransferase N-terminal domain occupies 5–257 (VFTKCERCKQ…DLERLLGFVG (253 aa)). The Zn(2+) site is built by C9, C12, C28, and C31. The segment at 9-31 (CERCKQPVYEKDLRARFNVCPNC) adopts a C4-type zinc-finger fold.

It belongs to the AccD/PCCB family. As to quaternary structure, acetyl-CoA carboxylase is a heterohexamer composed of biotin carboxyl carrier protein (AccB), biotin carboxylase (AccC) and two subunits each of ACCase subunit alpha (AccA) and ACCase subunit beta (AccD). Requires Zn(2+) as cofactor.

Its subcellular location is the cytoplasm. It catalyses the reaction N(6)-carboxybiotinyl-L-lysyl-[protein] + acetyl-CoA = N(6)-biotinyl-L-lysyl-[protein] + malonyl-CoA. It participates in lipid metabolism; malonyl-CoA biosynthesis; malonyl-CoA from acetyl-CoA: step 1/1. In terms of biological role, component of the acetyl coenzyme A carboxylase (ACC) complex. Biotin carboxylase (BC) catalyzes the carboxylation of biotin on its carrier protein (BCCP) and then the CO(2) group is transferred by the transcarboxylase to acetyl-CoA to form malonyl-CoA. This chain is Acetyl-coenzyme A carboxylase carboxyl transferase subunit beta, found in Rubrobacter xylanophilus (strain DSM 9941 / JCM 11954 / NBRC 16129 / PRD-1).